The primary structure comprises 169 residues: Peptide methionine sulfoxide reductase MsrA (169 aa).

Residue Cys13 is part of the active site.

This sequence belongs to the MsrA Met sulfoxide reductase family.

The enzyme catalyses L-methionyl-[protein] + [thioredoxin]-disulfide + H2O = L-methionyl-(S)-S-oxide-[protein] + [thioredoxin]-dithiol. It catalyses the reaction [thioredoxin]-disulfide + L-methionine + H2O = L-methionine (S)-S-oxide + [thioredoxin]-dithiol. Functionally, has an important function as a repair enzyme for proteins that have been inactivated by oxidation. Catalyzes the reversible oxidation-reduction of methionine sulfoxide in proteins to methionine. The polypeptide is Peptide methionine sulfoxide reductase MsrA (Mycolicibacterium gilvum (strain PYR-GCK) (Mycobacterium gilvum (strain PYR-GCK))).